A 464-amino-acid chain; its full sequence is ATP synthase subunit beta (464 aa).

Residue 153 to 160 (GGAGVGKT) participates in ATP binding.

The protein belongs to the ATPase alpha/beta chains family. In terms of assembly, F-type ATPases have 2 components, CF(1) - the catalytic core - and CF(0) - the membrane proton channel. CF(1) has five subunits: alpha(3), beta(3), gamma(1), delta(1), epsilon(1). CF(0) has three main subunits: a(1), b(2) and c(9-12). The alpha and beta chains form an alternating ring which encloses part of the gamma chain. CF(1) is attached to CF(0) by a central stalk formed by the gamma and epsilon chains, while a peripheral stalk is formed by the delta and b chains.

The protein localises to the cell membrane. It carries out the reaction ATP + H2O + 4 H(+)(in) = ADP + phosphate + 5 H(+)(out). In terms of biological role, produces ATP from ADP in the presence of a proton gradient across the membrane. The catalytic sites are hosted primarily by the beta subunits. This is ATP synthase subunit beta from Acetivibrio thermocellus (strain ATCC 27405 / DSM 1237 / JCM 9322 / NBRC 103400 / NCIMB 10682 / NRRL B-4536 / VPI 7372) (Clostridium thermocellum).